The sequence spans 264 residues: Tryptophan synthase alpha chain (264 aa).

Residues Glu-49 and Asp-60 each act as proton acceptor in the active site.

It belongs to the TrpA family. As to quaternary structure, tetramer of two alpha and two beta chains.

The enzyme catalyses (1S,2R)-1-C-(indol-3-yl)glycerol 3-phosphate + L-serine = D-glyceraldehyde 3-phosphate + L-tryptophan + H2O. It participates in amino-acid biosynthesis; L-tryptophan biosynthesis; L-tryptophan from chorismate: step 5/5. In terms of biological role, the alpha subunit is responsible for the aldol cleavage of indoleglycerol phosphate to indole and glyceraldehyde 3-phosphate. The sequence is that of Tryptophan synthase alpha chain from Geobacter sulfurreducens (strain ATCC 51573 / DSM 12127 / PCA).